Reading from the N-terminus, the 134-residue chain is Ribonuclease VapC (134 aa).

Positions 4-124 (IVDTSIIIAL…NTKDFKRIPE (121 aa)) constitute a PINc domain. Asp6 serves as a coordination point for Mg(2+).

It belongs to the PINc/VapC protein family. Mg(2+) serves as cofactor.

In terms of biological role, toxic component of a type II toxin-antitoxin (TA) system. Has ssRNase activity. Its RNase activity is partially neutralized by cognate antitoxin VapB. Rapidly induces apoptosis upon microinjection into mouse fibroblasts (L929 line). Probably contributes to host cell death if bacterial cell lysis occurs during host infection. This chain is Ribonuclease VapC, found in Rickettsia bellii (strain RML369-C).